A 306-amino-acid chain; its full sequence is Curved DNA-binding protein (306 aa).

Residues 5-69 enclose the J domain; that stretch reads DYYAIMGVKP…QRRAEYDQMW (65 aa).

Its subcellular location is the cytoplasm. The protein resides in the nucleoid. Its function is as follows. DNA-binding protein that preferentially recognizes a curved DNA sequence. It is probably a functional analog of DnaJ; displays overlapping activities with DnaJ, but functions under different conditions, probably acting as a molecular chaperone in an adaptive response to environmental stresses other than heat shock. Lacks autonomous chaperone activity; binds native substrates and targets them for recognition by DnaK. Its activity is inhibited by the binding of CbpM. The protein is Curved DNA-binding protein of Escherichia coli O127:H6 (strain E2348/69 / EPEC).